Consider the following 541-residue polypeptide: Valine N-monooxygenase 2 (541 aa).

Over 1 to 18 the chain is Cytoplasmic; the sequence is MAMNVSTTATTTASFAST. Residues 19-41 traverse the membrane as a helical segment; sequence SSMNNTAKILLITLFISIVSTVI. At 42–541 the chain is on the lumenal side; the sequence is KLQKRASYKK…LAPHLYPTSP (500 aa). Asn-277 is a glycosylation site (N-linked (GlcNAc...) asparagine). Cys-477 provides a ligand contact to heme. N-linked (GlcNAc...) asparagine glycosylation is present at Asn-505.

Belongs to the cytochrome P450 family. Requires heme as cofactor. Expressed in the epidermis, the next two cortex cell layers, the endodermis and the pericycle of leaf petioles. Strong expression around the laticifers among the phloem cells and in parenchymatic cells between the protoxylem and the metaxylem cells. In the leaves, preferentially expressed in the mesophyll cells adjacent to the epidermis.

The protein resides in the microsome membrane. The catalysed reaction is L-valine + 2 reduced [NADPH--hemoprotein reductase] + 2 O2 = (E)-2-methylpropanal oxime + 2 oxidized [NADPH--hemoprotein reductase] + CO2 + 3 H2O + 2 H(+). It carries out the reaction L-valine + reduced [NADPH--hemoprotein reductase] + O2 = N-hydroxy-L-valine + oxidized [NADPH--hemoprotein reductase] + H2O + 2 H(+). The enzyme catalyses N-hydroxy-L-valine + reduced [NADPH--hemoprotein reductase] + O2 = N,N-dihydroxy-L-valine + oxidized [NADPH--hemoprotein reductase] + H2O + H(+). It catalyses the reaction L-isoleucine + 2 reduced [NADPH--hemoprotein reductase] + 2 O2 = (1E,2S)-2-methylbutanal oxime + 2 oxidized [NADPH--hemoprotein reductase] + CO2 + 3 H2O + 2 H(+). The catalysed reaction is L-isoleucine + reduced [NADPH--hemoprotein reductase] + O2 = N-hydroxy-L-isoleucine + oxidized [NADPH--hemoprotein reductase] + H2O + 2 H(+). It carries out the reaction N-hydroxy-L-isoleucine + reduced [NADPH--hemoprotein reductase] + O2 = N,N-dihydroxy-L-isoleucine + oxidized [NADPH--hemoprotein reductase] + H2O + H(+). Functionally, involved in the biosynthesis of the cyanogenic glucosides linamarin and lotaustralin. Can use L-valine or L-isoleucine as substrate. Catalyzes multi-step reactions starting with two successive N-hydroxylations using L-valine and L-isoleucine as substrates leading to the formation of N,N-dihydroxy-L-valine and N,N-dihydroxy-L-isoleucine, respectively; following spontaneous reactions lead to the production of (E)-2-methylpropanal oxime and (1E,2S)-2-methylbutanal oxime, respectively. The protein is Valine N-monooxygenase 2 of Manihot esculenta (Cassava).